The chain runs to 807 residues: Poly-beta-1,6-N-acetyl-D-glucosamine export protein (807 aa).

The first 26 residues, 1–26 (MYSSSRKRCPKTKWALKLLTAAFLAA), serve as a signal peptide directing secretion. TPR repeat units follow at residues 98–131 (ARGY…EPQN), 165–198 (KANL…NAST), and 279–311 (RIQV…GQII).

The protein localises to the cell outer membrane. Its function is as follows. Exports the biofilm adhesin polysaccharide poly-beta-1,6-N-acetyl-D-glucosamine (PGA) across the outer membrane. The PGA transported seems to be partially N-deacetylated since N-deacetylation of PGA by PgaB is needed for PGA export through the PgaA porin. This Escherichia coli O157:H7 protein is Poly-beta-1,6-N-acetyl-D-glucosamine export protein (pgaA).